A 334-amino-acid chain; its full sequence is Ferredoxin--NADP reductase (334 aa).

The FAD site is built by Asp33, Gln41, Tyr46, Ala86, Phe120, Asp286, and Thr327.

This sequence belongs to the ferredoxin--NADP reductase type 2 family. In terms of assembly, homodimer. The cofactor is FAD.

The enzyme catalyses 2 reduced [2Fe-2S]-[ferredoxin] + NADP(+) + H(+) = 2 oxidized [2Fe-2S]-[ferredoxin] + NADPH. This Rickettsia typhi (strain ATCC VR-144 / Wilmington) protein is Ferredoxin--NADP reductase.